We begin with the raw amino-acid sequence, 198 residues long: Recombination protein RecR (198 aa).

The C4-type zinc finger occupies Cys57–Cys72. The Toprim domain occupies Thr80–Ala175.

This sequence belongs to the RecR family.

May play a role in DNA repair. It seems to be involved in an RecBC-independent recombinational process of DNA repair. It may act with RecF and RecO. This Lactococcus lactis subsp. cremoris (strain MG1363) protein is Recombination protein RecR.